The sequence spans 336 residues: Nicotinate-nucleotide--dimethylbenzimidazole phosphoribosyltransferase (336 aa).

Residues 20 to 41 form a disordered region; the sequence is GPDAAARAGAEERNGQLTKPPG. Glu304 serves as the catalytic Proton acceptor.

The protein belongs to the CobT family.

It carries out the reaction 5,6-dimethylbenzimidazole + nicotinate beta-D-ribonucleotide = alpha-ribazole 5'-phosphate + nicotinate + H(+). It participates in nucleoside biosynthesis; alpha-ribazole biosynthesis; alpha-ribazole from 5,6-dimethylbenzimidazole: step 1/2. In terms of biological role, catalyzes the synthesis of alpha-ribazole-5'-phosphate from nicotinate mononucleotide (NAMN) and 5,6-dimethylbenzimidazole (DMB). The sequence is that of Nicotinate-nucleotide--dimethylbenzimidazole phosphoribosyltransferase from Ruegeria pomeroyi (strain ATCC 700808 / DSM 15171 / DSS-3) (Silicibacter pomeroyi).